An 85-amino-acid chain; its full sequence is Oxytocin-neurophysin 1 (85 aa).

Position 3 is a glycine amide (G3). 6 disulfide bridges follow: C16–C60, C19–C33, C27–C50, C34–C40, C67–C79, and C80–C85.

This sequence belongs to the vasopressin/oxytocin family. In terms of assembly, interacts with oxytocin receptor (Ki=1.5 nM). Interacts with vasopressin V1aR/AVPR1A (Ki=37 nM), V1bR/AVPR1B (Ki=222 nM), and V2R/AVPR2 receptors (Ki=823 nM).

Neurophysin 1 specifically binds oxytocin. Its function is as follows. Oxytocin causes contraction of the smooth muscle of the uterus and of the mammary gland. Acts by binding to oxytocin receptor (OXTR). This Papio hamadryas (Hamadryas baboon) protein is Oxytocin-neurophysin 1 (OXT).